A 691-amino-acid chain; its full sequence is Solute carrier organic anion transporter family member 1B1 (691 aa).

At 1-28 (MDQNQHLNKTAEAQPSENKKTRYCNGLK) the chain is on the cytoplasmic side. A helical transmembrane segment spans residues 29-48 (MFLAALSLSFIAKTLGAIIM). At 49-67 (KSSIIHIERRFEISSSLVG) the chain is on the extracellular side. A helical membrane pass occupies residues 68–88 (FIDGSFEIGNLLVIVFVSYFG). The Cytoplasmic segment spans residues 89 to 94 (SKLHRP). The helical transmembrane segment at 95 to 119 (KLIGIGCFIMGIGGVLTALPHFFMG) threads the bilayer. The Extracellular portion of the chain corresponds to 120-168 (YYRYSKETNINSSENSTSTLSTCLINQILSLNRASPEIVGKGCLKESGS). Asparagine 130 and asparagine 134 each carry an N-linked (GlcNAc...) asparagine glycan. The chain crosses the membrane as a helical span at residues 169-197 (YMWIYVFMGNMLRGIGETPIVPLGLSYID). The Cytoplasmic portion of the chain corresponds to 198–216 (DFAKEGHSSLYLGILNAIA). Residues 217 to 237 (MIGPIIGFTLGSLFSKMYVDI) form a helical membrane-spanning segment. At 238–255 (GYVDLSTIRITPTDSRWV) the chain is on the extracellular side. The chain crosses the membrane as a helical span at residues 256–280 (GAWWLNFLVSGLFSIISSIPFFFLP). Topologically, residues 281–331 (QTPNKPQKERKASLSLHVLETNDEKDQTANLTNQGKNITKNVTGFFQSFKS) are cytoplasmic. 2 positions are modified to phosphoserine: serine 293 and serine 295. Residues 332 to 353 (ILTNPLYVMFVLLTLLQVSSYI) traverse the membrane as a helical segment. Topologically, residues 354-373 (GAFTYVFKYVEQQYGQPSSK) are extracellular. Residues 374 to 397 (ANILLGVITIPIFASGMFLGGYII) form a helical membrane-spanning segment. The Cytoplasmic portion of the chain corresponds to 398 to 401 (KKFK). A helical membrane pass occupies residues 402–425 (LNTVGIAKFSCFTAVMSLSFYLLY). The Extracellular segment spans residues 426–537 (FFILCENKSV…DACTRKFYFF (112 aa)). N-linked (GlcNAc...) asparagine glycosylation occurs at asparagine 432. The 56-residue stretch at 453–508 (DVPLSYCNSDCNCDESQWEPVCGNNGITYISPCLAGCKSSSGNKKPIVFYNCSCLE) folds into the Kazal-like domain. 3 cysteine pairs are disulfide-bonded: cysteine 459–cysteine 489, cysteine 465–cysteine 485, and cysteine 474–cysteine 506. N-linked (GlcNAc...) asparagine glycosylation is found at asparagine 503 and asparagine 516. The helical transmembrane segment at 538–560 (VAIQVLNLFFSALGGTSHVMLIV) threads the bilayer. Residues 561-569 (KIVQPELKS) lie on the Cytoplasmic side of the membrane. Residues 570 to 595 (LALGFHSMVIRALGGILAPIYFGALI) traverse the membrane as a helical segment. Residues 596–629 (DTTCIKWSTNNCGTRGSCRTYNSTSFSRVYLGLS) are Extracellular-facing. The N-linked (GlcNAc...) asparagine glycan is linked to asparagine 617. Residues 630–647 (SMLRVSSLVLYIILIYAM) form a helical membrane-spanning segment. Residues 648–691 (KKKYQEKDINASENGSVMDEANLESLNKNKHFVPSAGADSETHC) lie on the Cytoplasmic side of the membrane. Phosphoserine occurs at positions 672 and 682.

The protein belongs to the organo anion transporter (TC 2.A.60) family. In terms of tissue distribution, highly expressed in liver, at the basolateral membranes of centrilobular hepatocytes. Expressed in liver (at protein level). Expressed in fetal liver. Not detected in heart, brain, placenta, lung, skeletal muscle, kidney, pancreas, spleen, thymus, prostate, testis, ovary, small intestine, colon and leukocyte. In testis, primarily localized to the basal membrane of Sertoli cells and weakly expressed in Leydig cells and within the tubules.

Its subcellular location is the basolateral cell membrane. It is found in the basal cell membrane. It carries out the reaction taurocholate(out) = taurocholate(in). The catalysed reaction is dehydroepiandrosterone 3-sulfate(out) = dehydroepiandrosterone 3-sulfate(in). The enzyme catalyses estrone 3-sulfate(out) = estrone 3-sulfate(in). It catalyses the reaction 3,3',5'-triiodo-L-thyronine(out) = 3,3',5'-triiodo-L-thyronine(in). It carries out the reaction L-thyroxine(out) = L-thyroxine(in). The catalysed reaction is prostaglandin E2(out) = prostaglandin E2(in). The enzyme catalyses thromboxane B2(out) = thromboxane B2(in). It catalyses the reaction 17beta-estradiol 17-O-(beta-D-glucuronate)(out) = 17beta-estradiol 17-O-(beta-D-glucuronate)(in). It carries out the reaction leukotriene C4(out) = leukotriene C4(in). The catalysed reaction is leukotriene E4(out) = leukotriene E4(in). The enzyme catalyses (4E,15E)-bilirubin IXalpha C8-beta-D-glucuronoside(out) = (4E,15E)-bilirubin IXalpha C8-beta-D-glucuronoside(in). It catalyses the reaction bilirubin IXalpha bis-beta-D-glucuronoside(out) = bilirubin IXalpha bis-beta-D-glucuronoside(in). Functionally, mediates the Na(+)-independent uptake of organic anions. Shows broad substrate specificity, can transport both organic anions such as bile acid taurocholate (cholyltaurine) and conjugated steroids (dehydroepiandrosterone 3-sulfate, 17-beta-glucuronosyl estradiol, and estrone 3-sulfate), as well as eicosanoids (prostaglandin E2, thromboxane B2, leukotriene C4, and leukotriene E4), and thyroid hormones (T4/L-thyroxine, and T3/3,3',5'-triiodo-L-thyronine). Can take up bilirubin glucuronides from plasma into the liver, contributing to the detoxification-enhancing liver-blood shuttling loop. Involved in the clearance of endogenous and exogenous substrates from the liver. Transports coproporphyrin I and III, by-products of heme synthesis, and may be involved in their hepatic disposition. May contribute to regulate the transport of organic compounds in testes across the blood-testis-barrier. Can transport HMG-CoA reductase inhibitors (also known as statins), such as pravastatin and pitavastatin, a clinically important class of hypolipidemic drugs. May play an important role in plasma and tissue distribution of the structurally diverse chemotherapeutic drug methotrexate. May also transport antihypertension agents, such as the angiotensin-converting enzyme (ACE) inhibitor prodrug enalapril, and the highly selective angiotensin II AT1-receptor antagonist valsartan, in the liver. Shows a pH-sensitive substrate specificity towards prostaglandin E2 and T4 which may be ascribed to the protonation state of the binding site and leads to a stimulation of substrate transport in an acidic microenvironment. Hydrogencarbonate/HCO3(-) acts as the probable counteranion that exchanges for organic anions. This chain is Solute carrier organic anion transporter family member 1B1 (SLCO1B1), found in Homo sapiens (Human).